The following is a 503-amino-acid chain: Aminoaldehyde dehydrogenase 1, peroxisomal (503 aa).

Residues I28, D99, and L189 each contribute to the Na(+) site. Residue 238-245 coordinates NAD(+); sequence GSTMTGSK. The active-site Proton acceptor is E260. C294 and E393 together coordinate NAD(+). Residue C294 is the Nucleophile of the active site.

This sequence belongs to the aldehyde dehydrogenase family. Expressed in leaves, flowers and fruits.

The protein localises to the cytoplasm. It localises to the cytosol. The enzyme catalyses 4-aminobutanal + NAD(+) + H2O = 4-aminobutanoate + NADH + 2 H(+). The catalysed reaction is 3-aminopropanal + NAD(+) + H2O = beta-alanine + NADH + 2 H(+). It functions in the pathway amine and polyamine biosynthesis; betaine biosynthesis via choline pathway; betaine from betaine aldehyde: step 1/1. Dehydrogenase that catalyzes the oxidation of several aminoaldehydes. Metabolizes and detoxifies aldehyde products of polyamine degradation to non-toxic amino acids. Catalyzes the oxidation of 4-aminobutanal and 3-aminopropanal to 4-aminobutanoate and beta-alanine, respectively. The polypeptide is Aminoaldehyde dehydrogenase 1, peroxisomal (Malus domestica (Apple)).